We begin with the raw amino-acid sequence, 453 residues long: Putative F-box/FBD/LRR-repeat protein At1g66290 (453 aa).

The tract at residues 1-28 (MDEDGERRVRTKRSCSPESSDNGSGDEV) is disordered. Positions 14–23 (SCSPESSDNG) are enriched in polar residues. Residues 28-81 (VDWISDLPEALIVLVLLNLPTKDVIKTSVLSTKWRNIWRYVPRLDLDNRHFTEF) enclose the F-box domain. 5 LRR repeats span residues 155–179 (SLKL…VLVL), 210–235 (LDNV…SSKS), 246–269 (APKL…NLSS), 305–329 (LSRV…RCEP), and 358–381 (CSNL…IISE). The FBD domain maps to 373–423 (RKRTSIISEPRCLLSSLEYVKIEFALDKGKMELVRYLLENSPILKKLTLSL).

The chain is Putative F-box/FBD/LRR-repeat protein At1g66290 from Arabidopsis thaliana (Mouse-ear cress).